The chain runs to 313 residues: Ornithine carbamoyltransferase (313 aa).

Carbamoyl phosphate is bound by residues 57–60 (STRT), R108, and 135–138 (HPTQ). L-ornithine contacts are provided by residues N167, D231, and 235–236 (SM). Carbamoyl phosphate is bound by residues 272-273 (CL) and R300.

This sequence belongs to the aspartate/ornithine carbamoyltransferase superfamily. OTCase family.

It is found in the cytoplasm. It catalyses the reaction carbamoyl phosphate + L-ornithine = L-citrulline + phosphate + H(+). It participates in amino-acid biosynthesis; L-arginine biosynthesis; L-arginine from L-ornithine and carbamoyl phosphate: step 1/3. In terms of biological role, reversibly catalyzes the transfer of the carbamoyl group from carbamoyl phosphate (CP) to the N(epsilon) atom of ornithine (ORN) to produce L-citrulline. The protein is Ornithine carbamoyltransferase of Thermotoga maritima (strain ATCC 43589 / DSM 3109 / JCM 10099 / NBRC 100826 / MSB8).